Consider the following 396-residue polypeptide: Probable sugar efflux transporter (396 aa).

12 consecutive transmembrane segments (helical) span residues 15–35 (VVTL…PVGL), 50–70 (VGIM…PFML), 81–101 (LICL…SWSF), 103–123 (VLVI…SITA), 136–156 (AQAL…GLPL), 170–190 (FFAI…LLPL), 209–229 (PALM…YTAY), 246–266 (FATA…VIFG), 275–295 (ALVS…LPAA), 299–319 (IHLG…GLGM), 333–353 (VAMA…ALVG), and 364–384 (MIGY…IIIF).

This sequence belongs to the major facilitator superfamily. SotB (TC 2.A.1.2) family.

The protein resides in the cell inner membrane. Its function is as follows. Involved in the efflux of sugars. The physiological role may be the reduction of the intracellular concentration of toxic sugars or sugar metabolites. In Escherichia coli O17:K52:H18 (strain UMN026 / ExPEC), this protein is Probable sugar efflux transporter.